The sequence spans 116 residues: Cation channel sperm-associated auxiliary subunit TMEM262 (116 aa).

The Cytoplasmic segment spans residues 1–16 (MWLQDRIATFFFPKGM). The helical transmembrane segment at 17 to 38 (MLTTAALMLFFLHLGIFIRDVH) threads the bilayer. At 39–51 (NFCITYHYDHMSF) the chain is on the extracellular side. The helical transmembrane segment at 52–72 (HYTVVLMFSQVISICWAAMGS) threads the bilayer. Residues 73–84 (LYAEMTENKYVC) lie on the Cytoplasmic side of the membrane. The helical transmembrane segment at 85–107 (FSALTILMLNGAMFFNRLSLEFL) threads the bilayer. At 108 to 116 (AIEYREEHH) the chain is on the extracellular side.

As to quaternary structure, component of the CatSper complex or CatSpermasome composed of the core pore-forming members CATSPER1, CATSPER2, CATSPER3 and CATSPER4 as well as auxiliary members CATSPERB, CATSPERG, CATSPERD, CATSPERE, CATSPERZ, C2CD6/CATSPERT, TMEM249, TMEM262 and EFCAB9. HSPA1 may be an additional auxiliary complex member. The core complex members CATSPER1, CATSPER2, CATSPER3 and CATSPER4 form a heterotetrameric channel. The auxiliary CATSPERB, CATSPERG, CATSPERD and CATSPERE subunits form a pavilion-like structure over the pore which stabilizes the complex through interactions with CATSPER4, CATSPER3, CATSPER1 and CATSPER2 respectively. TMEM262/CATSPERH interacts with CATSPERB, further stabilizing the complex. C2CD6/CATSPERT interacts at least with CATSPERD and is required for targeting the CatSper complex in the flagellar membrane.

The protein resides in the cell projection. Its subcellular location is the cilium. It is found in the flagellum membrane. Functionally, auxiliary component of the CatSper complex, a complex involved in sperm cell hyperactivation. This chain is Cation channel sperm-associated auxiliary subunit TMEM262, found in Homo sapiens (Human).